We begin with the raw amino-acid sequence, 622 residues long: Cilia- and flagella-associated protein 206 (622 aa).

The tract at residues 568-593 (NTSQVYPLKEASTQSKREGSSRVPRP) is disordered.

Belongs to the CFAP206 family. Expressed in the sperm, oviduct, lung, nasal cavity, brain ependyma and choroid plexus.

The protein localises to the cytoplasm. It localises to the cytoskeleton. Its subcellular location is the cilium axoneme. The protein resides in the cilium basal body. Functionally, essential for sperm motility and is involved in the regulation of the beating frequency of motile cilia on the epithelial cells of the respiratory tract. Required for the establishment of radial spokes in sperm flagella. The chain is Cilia- and flagella-associated protein 206 from Mus musculus (Mouse).